The following is a 79-amino-acid chain: Translational regulator CsrA (79 aa).

This sequence belongs to the CsrA/RsmA family. As to quaternary structure, homodimer; the beta-strands of each monomer intercalate to form a hydrophobic core, while the alpha-helices form wings that extend away from the core.

Its subcellular location is the cytoplasm. Functionally, a translational regulator that binds mRNA to regulate translation initiation and/or mRNA stability. Usually binds in the 5'-UTR at or near the Shine-Dalgarno sequence preventing ribosome-binding, thus repressing translation. Its main target seems to be the major flagellin gene, while its function is anatagonized by FliW. The sequence is that of Translational regulator CsrA from Geotalea uraniireducens (strain Rf4) (Geobacter uraniireducens).